Consider the following 478-residue polypeptide: Poly(A) RNA polymerase cid11 (478 aa).

Residues Asp106 and Asp108 each contribute to the Mg(2+) site. The PAP-associated domain occupies 263–317 (SLGRLLIDFFYYYGFSFNYLDSVVSVRSGTVLNKQEKGWAMEVNNSLCVEEPFNT). The segment at 428–447 (QSYENKANRDSDFQGQTSLT) is disordered.

Belongs to the DNA polymerase type-B-like family. Mg(2+) serves as cofactor. Requires Mn(2+) as cofactor.

The protein localises to the cytoplasm. The protein resides in the nucleus. It catalyses the reaction RNA(n) + ATP = RNA(n)-3'-adenine ribonucleotide + diphosphate. This is Poly(A) RNA polymerase cid11 (cid11) from Schizosaccharomyces pombe (strain 972 / ATCC 24843) (Fission yeast).